We begin with the raw amino-acid sequence, 210 residues long: Na(+)-translocating NADH-quinone reductase subunit D (210 aa).

Transmembrane regions (helical) follow at residues 14 to 34, 42 to 62, 72 to 92, 103 to 123, 131 to 151, and 178 to 198; these read PIVN…ALAV, LVMA…ISMI, IIVQ…LLQA, VFVG…AYAM, FMDG…VGFV, and NGLL…IWII.

The protein belongs to the NqrDE/RnfAE family. In terms of assembly, composed of six subunits; NqrA, NqrB, NqrC, NqrD, NqrE and NqrF.

Its subcellular location is the cell inner membrane. The enzyme catalyses a ubiquinone + n Na(+)(in) + NADH + H(+) = a ubiquinol + n Na(+)(out) + NAD(+). NQR complex catalyzes the reduction of ubiquinone-1 to ubiquinol by two successive reactions, coupled with the transport of Na(+) ions from the cytoplasm to the periplasm. NqrA to NqrE are probably involved in the second step, the conversion of ubisemiquinone to ubiquinol. The chain is Na(+)-translocating NADH-quinone reductase subunit D from Shewanella oneidensis (strain ATCC 700550 / JCM 31522 / CIP 106686 / LMG 19005 / NCIMB 14063 / MR-1).